The chain runs to 260 residues: Carbonic anhydrase 2 (260 aa).

Residue S2 is modified to N-acetylserine. Position 2 is a phosphoserine (S2). The 257-residue stretch at 3–259 (HHWGYGKHNG…LKNRQIKASF (257 aa)) folds into the Alpha-carbonic anhydrase domain. H64 functions as the Proton donor/acceptor in the catalytic mechanism. Zn(2+) is bound by residues H94, H96, and H119. Phosphoserine occurs at positions 165 and 172. 198 to 199 (TT) provides a ligand contact to substrate.

The protein belongs to the alpha-carbonic anhydrase family. In terms of assembly, interacts with SLC4A4. Interaction with SLC4A7 regulates SLC4A7 transporter activity. Interacts with SLC26A6 isoform 4 (via C-terminus cytoplasmic domain). It depends on Zn(2+) as a cofactor. Co(2+) serves as cofactor.

Its subcellular location is the cytoplasm. The protein resides in the cell membrane. The catalysed reaction is hydrogencarbonate + H(+) = CO2 + H2O. It catalyses the reaction urea = cyanamide + H2O. Activated by X-ray, histamine, L-adrenaline, L- and D-phenylalanine, L- and D-histidine, L-His-OMe and beta-Ala-His (carnosine). Competitively inhibited by saccharin, thioxolone, coumarins, 667-coumate, celecoxib (Celebrex), valdecoxib (Bextra), SC-125, SC-560, diclofenac, acetate, azide, bromide, sulfonamide derivatives such as acetazolamide (AZA), methazolamide (MZA), ethoxzolamide (EZA), dichlorophenamide (DCP), brinzolamide, dansylamide, thiabendazole-5-sulfonamide, trifluoromethane sulfonamide and N-hydroxysulfamide, fructose-based sugar sulfamate RWJ-37497, and Foscarnet (phosphonoformate trisodium salt). Repressed strongly by hydrogen sulfide(HS) and weakly by nitrate (NO(3)). Esterase activity weakly reduced by cyanamide. N-hydroxyurea interferes with zinc binding and inhibit activity. Its function is as follows. Catalyzes the reversible hydration of carbon dioxide. Can also hydrate cyanamide to urea. Stimulates the chloride-bicarbonate exchange activity of SLC26A6. Essential for bone resorption and osteoclast differentiation. Involved in the regulation of fluid secretion into the anterior chamber of the eye. Contributes to intracellular pH regulation in the duodenal upper villous epithelium during proton-coupled peptide absorption. In Homo sapiens (Human), this protein is Carbonic anhydrase 2 (CA2).